Consider the following 132-residue polypeptide: Small ribosomal subunit protein eS12 (132 aa).

A2 is modified (N-acetylalanine). K129 carries the N6-succinyllysine modification.

This sequence belongs to the eukaryotic ribosomal protein eS12 family. As to quaternary structure, part of the small subunit (SSU) processome, composed of more than 70 proteins and the RNA chaperone small nucleolar RNA (snoRNA) U3. Subunit of the 40S ribosomal complex.

The protein localises to the nucleus. The protein resides in the nucleolus. Its function is as follows. Part of the small subunit (SSU) processome, first precursor of the small eukaryotic ribosomal subunit. During the assembly of the SSU processome in the nucleolus, many ribosome biogenesis factors, an RNA chaperone and ribosomal proteins associate with the nascent pre-rRNA and work in concert to generate RNA folding, modifications, rearrangements and cleavage as well as targeted degradation of pre-ribosomal RNA by the RNA exosome. Subunit of the 40S ribosomal complex. This chain is Small ribosomal subunit protein eS12 (Rps12), found in Mus musculus (Mouse).